A 250-amino-acid polypeptide reads, in one-letter code: 5-oxoprolinase subunit A (250 aa).

The protein belongs to the LamB/PxpA family. Forms a complex composed of PxpA, PxpB and PxpC.

The catalysed reaction is 5-oxo-L-proline + ATP + 2 H2O = L-glutamate + ADP + phosphate + H(+). In terms of biological role, catalyzes the cleavage of 5-oxoproline to form L-glutamate coupled to the hydrolysis of ATP to ADP and inorganic phosphate. In Thermus thermophilus (strain ATCC BAA-163 / DSM 7039 / HB27), this protein is 5-oxoprolinase subunit A.